Reading from the N-terminus, the 346-residue chain is S-adenosylmethionine:tRNA ribosyltransferase-isomerase (346 aa).

Belongs to the QueA family. In terms of assembly, monomer.

It is found in the cytoplasm. It carries out the reaction 7-aminomethyl-7-carbaguanosine(34) in tRNA + S-adenosyl-L-methionine = epoxyqueuosine(34) in tRNA + adenine + L-methionine + 2 H(+). It functions in the pathway tRNA modification; tRNA-queuosine biosynthesis. In terms of biological role, transfers and isomerizes the ribose moiety from AdoMet to the 7-aminomethyl group of 7-deazaguanine (preQ1-tRNA) to give epoxyqueuosine (oQ-tRNA). In Lysinibacillus sphaericus (strain C3-41), this protein is S-adenosylmethionine:tRNA ribosyltransferase-isomerase.